The primary structure comprises 80 residues: Acyl carrier protein (80 aa).

A Carrier domain is found at 4 to 79 (NSIEEKVRSI…DVVAYIEKVQ (76 aa)). Position 39 is an O-(pantetheine 4'-phosphoryl)serine (Ser-39).

Belongs to the acyl carrier protein (ACP) family. In terms of processing, 4'-phosphopantetheine is transferred from CoA to a specific serine of apo-ACP by AcpS. This modification is essential for activity because fatty acids are bound in thioester linkage to the sulfhydryl of the prosthetic group.

The protein localises to the cytoplasm. It functions in the pathway lipid metabolism; fatty acid biosynthesis. Carrier of the growing fatty acid chain in fatty acid biosynthesis. This is Acyl carrier protein from Akkermansia muciniphila (strain ATCC BAA-835 / DSM 22959 / JCM 33894 / BCRC 81048 / CCUG 64013 / CIP 107961 / Muc).